Here is an 81-residue protein sequence, read N- to C-terminus: ATP synthase subunit c (81 aa).

The next 2 membrane-spanning stretches (helical) occupy residues 7–27 and 53–73; these read FVAL…CIGI and FLLA…AMMF.

The protein belongs to the ATPase C chain family. F-type ATPases have 2 components, F(1) - the catalytic core - and F(0) - the membrane proton channel. F(1) has five subunits: alpha(3), beta(3), gamma(1), delta(1), epsilon(1). F(0) has three main subunits: a(1), b(2) and c(10-14). The alpha and beta chains form an alternating ring which encloses part of the gamma chain. F(1) is attached to F(0) by a central stalk formed by the gamma and epsilon chains, while a peripheral stalk is formed by the delta and b chains.

It localises to the cell inner membrane. F(1)F(0) ATP synthase produces ATP from ADP in the presence of a proton or sodium gradient. F-type ATPases consist of two structural domains, F(1) containing the extramembraneous catalytic core and F(0) containing the membrane proton channel, linked together by a central stalk and a peripheral stalk. During catalysis, ATP synthesis in the catalytic domain of F(1) is coupled via a rotary mechanism of the central stalk subunits to proton translocation. In terms of biological role, key component of the F(0) channel; it plays a direct role in translocation across the membrane. A homomeric c-ring of between 10-14 subunits forms the central stalk rotor element with the F(1) delta and epsilon subunits. The polypeptide is ATP synthase subunit c (Azoarcus sp. (strain BH72)).